We begin with the raw amino-acid sequence, 25 residues long: GMKDYFKKLLQKVIKKIKSFRKKQD.

In terms of tissue distribution, expressed by the venom gland.

Its subcellular location is the secreted. Its function is as follows. May have cytolytic and antimicrobial activity. This Oxyopes takobius (Lynx spider) protein is Oxyopinin-3c.